Reading from the N-terminus, the 182-residue chain is LIM domain-containing protein C (182 aa).

2 LIM zinc-binding domains span residues 3–63 (SICP…LFRQ) and 110–170 (TNCP…KFGP).

It is found in the cell projection. The protein resides in the pseudopodium. The protein localises to the cytoplasm. Its subcellular location is the cell cortex. It localises to the cytoskeleton. Its function is as follows. Binds to F-actin and may modulate the chemotactic response during early development and contribute to the maintenance of the strength of the actin cytoskeleton. In Dictyostelium discoideum (Social amoeba), this protein is LIM domain-containing protein C (limC).